The following is a 365-amino-acid chain: 3-dehydroquinate synthase (365 aa).

NAD(+) is bound by residues 69-74, 103-107, 127-128, lysine 140, and lysine 149; these read DGEAHK, GVIGD, and TT. Zn(2+) is bound by residues glutamate 182, histidine 245, and histidine 262.

Belongs to the sugar phosphate cyclases superfamily. Dehydroquinate synthase family. Co(2+) is required as a cofactor. It depends on Zn(2+) as a cofactor. NAD(+) serves as cofactor.

It is found in the cytoplasm. It catalyses the reaction 7-phospho-2-dehydro-3-deoxy-D-arabino-heptonate = 3-dehydroquinate + phosphate. It participates in metabolic intermediate biosynthesis; chorismate biosynthesis; chorismate from D-erythrose 4-phosphate and phosphoenolpyruvate: step 2/7. Functionally, catalyzes the conversion of 3-deoxy-D-arabino-heptulosonate 7-phosphate (DAHP) to dehydroquinate (DHQ). This Pseudomonas putida (strain ATCC 700007 / DSM 6899 / JCM 31910 / BCRC 17059 / LMG 24140 / F1) protein is 3-dehydroquinate synthase.